We begin with the raw amino-acid sequence, 327 residues long: Eukaryotic translation initiation factor 3 subunit I (327 aa).

6 WD repeats span residues 8-49, 51-91, 144-183, 188-227, 229-268, and 285-324; these read GHDR…GTYD, HNGV…NSVS, SLQT…DIVN, AHKF…CLKT, KAER…GHFE, and GHFG…LKFD.

Belongs to the eIF-3 subunit I family. As to quaternary structure, component of the eukaryotic translation initiation factor 3 (eIF-3) complex.

It localises to the cytoplasm. In terms of biological role, component of the eukaryotic translation initiation factor 3 (eIF-3) complex, which is involved in protein synthesis of a specialized repertoire of mRNAs and, together with other initiation factors, stimulates binding of mRNA and methionyl-tRNAi to the 40S ribosome. The eIF-3 complex specifically targets and initiates translation of a subset of mRNAs involved in cell proliferation. This is Eukaryotic translation initiation factor 3 subunit I from Brugia malayi (Filarial nematode worm).